The sequence spans 167 residues: Ribosome-binding factor A (167 aa).

Positions 127-167 are disordered; it reads SRANAQYAGDADPYKHDEPDDDDFDDDDDVEVEDWDDDDEA. Over residues 145-167 the composition is skewed to acidic residues; the sequence is PDDDDFDDDDDVEVEDWDDDDEA.

This sequence belongs to the RbfA family. As to quaternary structure, monomer. Binds 30S ribosomal subunits, but not 50S ribosomal subunits or 70S ribosomes.

The protein resides in the cytoplasm. In terms of biological role, one of several proteins that assist in the late maturation steps of the functional core of the 30S ribosomal subunit. Associates with free 30S ribosomal subunits (but not with 30S subunits that are part of 70S ribosomes or polysomes). Required for efficient processing of 16S rRNA. May interact with the 5'-terminal helix region of 16S rRNA. In Bifidobacterium adolescentis (strain ATCC 15703 / DSM 20083 / NCTC 11814 / E194a), this protein is Ribosome-binding factor A.